A 289-amino-acid chain; its full sequence is Enoyl-CoA delta isomerase 1, mitochondrial (289 aa).

Residues 1 to 28 constitute a mitochondrion transit peptide; the sequence is MALAAARRVLLQAGSRLGRRGAVDGARR. Position 48 is an N6-acetyllysine; alternate (Lys48). Lys48 carries the post-translational modification N6-succinyllysine; alternate. At Lys71 the chain carries N6-succinyllysine. Lys76 is modified (N6-acetyllysine). Substrate is bound by residues 93-97, Gly140, and Asn164; that span reads AGLDL. Residues Lys222, Lys229, and Lys255 each carry the N6-acetyllysine; alternate modification. Lys222, Lys229, and Lys255 each carry N6-succinyllysine; alternate. Position 275 is an N6-succinyllysine (Lys275). An N6-acetyllysine; alternate modification is found at Lys283. Lys283 carries the N6-succinyllysine; alternate modification.

This sequence belongs to the enoyl-CoA hydratase/isomerase family. Homotrimer.

It is found in the mitochondrion matrix. It catalyses the reaction a (3Z)-enoyl-CoA = a 4-saturated (2E)-enoyl-CoA. It carries out the reaction a (3E)-enoyl-CoA = a 4-saturated (2E)-enoyl-CoA. The enzyme catalyses (3Z)-octenoyl-CoA = (2E)-octenoyl-CoA. The catalysed reaction is (2E)-tetradecenoyl-CoA = (3Z)-tetradecenoyl-CoA. It catalyses the reaction (3Z)-dodecenoyl-CoA = (2E)-dodecenoyl-CoA. It carries out the reaction (3Z)-hexenoyl-CoA = (2E)-hexenoyl-CoA. The enzyme catalyses (3Z)-decenoyl-CoA = (2E)-decenoyl-CoA. The protein operates within lipid metabolism; fatty acid beta-oxidation. Functionally, key enzyme of fatty acid beta-oxidation. Able to isomerize both 3-cis (3Z) and 3-trans (3E) double bonds into the 2-trans (2E) form in a range of enoyl-CoA species, with a preference for (3Z)-enoyl-CoAs over (3E)-enoyl-CoAs. The catalytic efficiency of this enzyme is not affected by the fatty acyl chain length. The protein is Enoyl-CoA delta isomerase 1, mitochondrial of Rattus norvegicus (Rat).